Reading from the N-terminus, the 431-residue chain is Glucose-1-phosphate adenylyltransferase (431 aa).

Beta-D-fructose 1,6-bisphosphate is bound at residue Lys39. Residues Arg40, His46, and Arg52 each contribute to the AMP site. Alpha-D-glucose 1-phosphate is bound at residue Tyr114. Arg130 provides a ligand contact to AMP. Alpha-D-glucose 1-phosphate-binding positions include Gly179, 194 to 195, and Ser212; that span reads EK. Positions 370 and 386 each coordinate AMP. Residues 419–423 and 429–431 each bind beta-D-fructose 1,6-bisphosphate; these read REMLR and QER.

This sequence belongs to the bacterial/plant glucose-1-phosphate adenylyltransferase family. As to quaternary structure, homotetramer.

The catalysed reaction is alpha-D-glucose 1-phosphate + ATP + H(+) = ADP-alpha-D-glucose + diphosphate. The protein operates within glycan biosynthesis; glycogen biosynthesis. With respect to regulation, allosterically activated by fructose-1,6-bisphosphate (F16BP) and inhibited by AMP. Functionally, involved in the biosynthesis of ADP-glucose, a building block required for the elongation reactions to produce glycogen. Catalyzes the reaction between ATP and alpha-D-glucose 1-phosphate (G1P) to produce pyrophosphate and ADP-Glc. In Salmonella paratyphi A (strain ATCC 9150 / SARB42), this protein is Glucose-1-phosphate adenylyltransferase.